A 216-amino-acid chain; its full sequence is Chloramphenicol acetyltransferase (216 aa).

H186 (proton acceptor) is an active-site residue.

It belongs to the chloramphenicol acetyltransferase family. Homotrimer.

The enzyme catalyses chloramphenicol + acetyl-CoA = chloramphenicol 3-acetate + CoA. In terms of biological role, this enzyme is an effector of chloramphenicol resistance in bacteria. This is Chloramphenicol acetyltransferase (cat) from Vibrio anguillarum (Listonella anguillarum).